A 69-amino-acid polypeptide reads, in one-letter code: Cold shock-like protein CspC (69 aa).

The 61-residue stretch at 6–66 (GQVKWFNESK…GQKGPAAVNV (61 aa)) folds into the CSD domain.

It is found in the cytoplasm. This is Cold shock-like protein CspC (cspC) from Buchnera aphidicola subsp. Acyrthosiphon pisum (strain APS) (Acyrthosiphon pisum symbiotic bacterium).